Here is a 141-residue protein sequence, read N- to C-terminus: MRHQKAGRKLNRTASHRKAMFANMAASLITHEQIVTTLPKAKEIRPIVERLVTLGKRGDLHARRQAISQIRDQDAVRKLFDAIATRYASRNGGYLRIMKAGFRQGDNAPLAVIEFVERDVDAKGAADKARVAAEAETAEAA.

It belongs to the bacterial ribosomal protein bL17 family. Part of the 50S ribosomal subunit. Contacts protein L32.

The chain is Large ribosomal subunit protein bL17 from Allorhizobium ampelinum (strain ATCC BAA-846 / DSM 112012 / S4) (Agrobacterium vitis (strain S4)).